Reading from the N-terminus, the 170-residue chain is RxLR effector protein CRE16 (170 aa).

The signal sequence occupies residues 1 to 23 (MSKLFYAFAVLAVHVLTSSPTTA). Residues 47–68 (RFLRSIHEGEDSLKPSAFSEER) carry the RxLR-dEER motif.

Belongs to the RxLR effector family.

Its subcellular location is the secreted. It localises to the host cytoplasm. The protein resides in the host nucleus. Effector that is involved in host plant infection. Contributes to virulence during the early infection stage, by inhibiting plant defense responses induced by both PAMP-triggered immunity (PTI) and effector-triggered immunity (ETI). The chain is RxLR effector protein CRE16 from Phytophthora infestans (strain T30-4) (Potato late blight agent).